We begin with the raw amino-acid sequence, 657 residues long: Threonine--tRNA ligase (657 aa).

Residues 7–70 form the TGS domain; sequence SQTQVTVTLP…SEDASIEIVT (64 aa). The interval 253 to 555 is catalytic; the sequence is DHRKLGAELE…LIEHTGGNFP (303 aa). Zn(2+) contacts are provided by Cys-351, His-402, and His-532.

This sequence belongs to the class-II aminoacyl-tRNA synthetase family. Homodimer. Zn(2+) serves as cofactor.

The protein resides in the cytoplasm. It carries out the reaction tRNA(Thr) + L-threonine + ATP = L-threonyl-tRNA(Thr) + AMP + diphosphate + H(+). In terms of biological role, catalyzes the attachment of threonine to tRNA(Thr) in a two-step reaction: L-threonine is first activated by ATP to form Thr-AMP and then transferred to the acceptor end of tRNA(Thr). Also edits incorrectly charged L-seryl-tRNA(Thr). In Prosthecochloris aestuarii (strain DSM 271 / SK 413), this protein is Threonine--tRNA ligase.